A 398-amino-acid polypeptide reads, in one-letter code: Putative isocitrate lyase subunit B (398 aa).

Belongs to the isocitrate lyase/PEP mutase superfamily. Isocitrate lyase family. Requires Mg(2+) as cofactor.

It catalyses the reaction D-threo-isocitrate = glyoxylate + succinate. Its function is as follows. Together with AceAa, they could catalyze the formation of succinate and glyoxylate from isocitrate. In Mycobacterium tuberculosis (strain ATCC 25618 / H37Rv), this protein is Putative isocitrate lyase subunit B (aceAb).